The following is a 623-amino-acid chain: Dictomallein-5 (623 aa).

Positions 1–21 (MKIFIIKIILVLFNYVLLSYS) are cleaved as a signal peptide. The region spanning 174–435 (PNVGQDYTLK…QNYFKNSIYY (262 aa)) is the Peptidase M66 domain. H327 is a binding site for Zn(2+). E328 is a catalytic residue. Zn(2+) contacts are provided by H331 and H337.

The protein belongs to the dictomallein family. Zn(2+) is required as a cofactor.

Its subcellular location is the secreted. This Dictyostelium discoideum (Social amoeba) protein is Dictomallein-5 (dtmlE).